A 151-amino-acid polypeptide reads, in one-letter code: Hemoglobin-2 (151 aa).

Thr-2 carries the post-translational modification N-acetylthreonine. The region spanning 3–148 (TLTNPQKAAI…ICKTLGDYMK (146 aa)) is the Globin domain. Heme b is bound at residue His-97.

It belongs to the globin family. In terms of assembly, homotetramer.

The protein resides in the cytoplasm. This chain is Hemoglobin-2, found in Phacoides pectinatus (Thick lucine).